Consider the following 334-residue polypeptide: Formamidase (334 aa).

A CN hydrolase domain is found at 14–260 (FLVAAIQFPV…WEIVTGEIYP (247 aa)). The active-site Proton acceptor is glutamate 60. Lysine 133 functions as the Proton donor in the catalytic mechanism. Cysteine 166 (nucleophile) is an active-site residue.

Belongs to the carbon-nitrogen hydrolase superfamily. Aliphatic amidase family.

The catalysed reaction is formamide + H2O = formate + NH4(+). Its function is as follows. Is an aliphatic amidase with a restricted substrate specificity, as it only hydrolyzes formamide. The protein is Formamidase of Helicobacter pylori (strain J99 / ATCC 700824) (Campylobacter pylori J99).